Here is a 509-residue protein sequence, read N- to C-terminus: MSDAQNAKTVNEAASVQPDENHVIAERREKLKAIREQGVAFPNDFRPEHIAQSLHDSYDAVEAEALESQALGVAIAGRMMLKRVMGKASFATVQDRSGRIQIFITRENVGEATYDAFKKWDLGDIIAARGTLFKTKTGELSVKVSELRLLTKSLRPLPEKFHGLADQETKYRQRYVDLIVSEETRKTFVARSKIVAAIRAFMLSHEFLEVETPMLHPIPGGAAAKPFITHHNALDLQMYMRIAPELYLKRLVVGGFERVFEINRNFRNEGLSVRHNPEFTMMEFYAAYTDYKWLMDFTESCIRAAAIAACGSAVVEYQGRELDLGKPFERLTIIGAIQKYAPQYTLEQLSDQAFLRQELKKFGVEALPHLGLGALQLALFEETAESQLWNPTYIIDYPVEVSPLARASDSDPSITERYELFITGREIANGFSELNDAEDQAARFHAQVAAKEAGDDEAMYYDGDFIRALEYGMPPTGGCGIGIDRLVMLLTDSPSIRDVILFPHMRPEH.

Mg(2+)-binding residues include Glu419 and Glu426.

Belongs to the class-II aminoacyl-tRNA synthetase family. Homodimer. Mg(2+) serves as cofactor.

It is found in the cytoplasm. It catalyses the reaction tRNA(Lys) + L-lysine + ATP = L-lysyl-tRNA(Lys) + AMP + diphosphate. This chain is Lysine--tRNA ligase, found in Methylobacillus flagellatus (strain ATCC 51484 / DSM 6875 / VKM B-1610 / KT).